Reading from the N-terminus, the 1353-residue chain is Protein timeless homolog (1353 aa).

3 disordered regions span residues Val-798–Val-825, Lys-1150–Asp-1291, and Gly-1306–Thr-1335. Acidic residues predominate over residues Arg-802 to Val-825. 2 stretches are compositionally biased toward basic and acidic residues: residues Lys-1150–Glu-1160 and Glu-1168–Asp-1182. Composition is skewed to acidic residues over residues Phe-1183 to Glu-1206 and Asp-1217 to Glu-1226. Basic and acidic residues predominate over residues Gln-1227–Glu-1239. Acidic residues-rich tracts occupy residues Asp-1261 to Glu-1273, Ala-1282 to Asp-1291, and Glu-1323 to Asp-1332.

It belongs to the timeless family. As to quaternary structure, associates with the cohesin complex. Interacts with smc-1, smc-3, scc-1 and scc-3.

The protein resides in the nucleus. Plays an important role in chromosome cohesion during both mitosis and meiosis. In prophase of meiosis, it is involved in the formation of the synaptonemal complex (SC) and specifically, in the diplotene and diakinesis phases of prophase, it stabilizes the association of homologous chromosomes during synapsis and sister chromatid cohesion. It regulates cohesin subunits to promote meiotic chromosome cohesion and localizes non-SMC (structural maintenance of chromosome) cohesin subunits to chromatin prior to or during pre-meiotic S phase. Implicated in influencing either the stability or loading of meiotic-specific cohesin subunit, rec8. Controls cell cycle exit and cell fusion to prevent the premature differentiation into adult cells. Specifically, regulates hypodermal seam cell identity. The sequence is that of Protein timeless homolog from Caenorhabditis elegans.